The primary structure comprises 498 residues: Glycerol kinase (498 aa).

An ADP-binding site is contributed by T12. The ATP site is built by T12, T13, and S14. T12 provides a ligand contact to sn-glycerol 3-phosphate. R16 is an ADP binding site. The sn-glycerol 3-phosphate site is built by R82, E83, and Y134. The glycerol site is built by R82, E83, and Y134. Phosphohistidine; by HPr is present on H230. D244 provides a ligand contact to sn-glycerol 3-phosphate. Residues D244 and Q245 each coordinate glycerol. Positions 266 and 309 each coordinate ADP. Residues T266, G309, Q313, and G410 each coordinate ATP. G410 and N414 together coordinate ADP.

This sequence belongs to the FGGY kinase family. As to quaternary structure, homotetramer and homodimer (in equilibrium). The phosphoenolpyruvate-dependent sugar phosphotransferase system (PTS), including enzyme I, and histidine-containing protein (HPr) are required for the phosphorylation, which leads to the activation of the enzyme.

It catalyses the reaction glycerol + ATP = sn-glycerol 3-phosphate + ADP + H(+). The protein operates within polyol metabolism; glycerol degradation via glycerol kinase pathway; sn-glycerol 3-phosphate from glycerol: step 1/1. Activated by phosphorylation and inhibited by fructose 1,6-bisphosphate (FBP). Key enzyme in the regulation of glycerol uptake and metabolism. Catalyzes the phosphorylation of glycerol to yield sn-glycerol 3-phosphate. This is Glycerol kinase from Staphylococcus aureus (strain MSSA476).